The following is a 670-amino-acid chain: Transcription factor Ken 2 (670 aa).

Positions 108-176 (TDLLLICDGK…LYSGQVYVRS (69 aa)) constitute a BTB domain. Disordered regions lie at residues 200–288 (SDGS…DRDR) and 307–470 (NNHP…SDDA). Polar residues predominate over residues 218–230 (NRNTEGITGSSVV). Positions 325–338 (HHLHHHHHHHHRQL) are enriched in basic residues. Composition is skewed to gly residues over residues 351 to 368 (GGGS…GESG) and 389 to 400 (SGGGGAGSGRRS). Residues 407–419 (EPAEDDEDYELDV) show a composition bias toward acidic residues. Over residues 451 to 464 (SDPVNLSIVKQQQD) the composition is skewed to polar residues. A C2H2-type 1; degenerate zinc finger spans residues 586–594 (NLKTHLRVH). C2H2-type zinc fingers lie at residues 600 to 623 (FACR…CSVH) and 636 to 658 (YTCC…LSGH).

It localises to the nucleus. Its function is as follows. Transcription factor required for terminalia development. Negative regulator of the JAK/STAT pathway: represses JAK/STAT-dependent expression of ventral veins lacking (vvl) in the posterior spiracles. The polypeptide is Transcription factor Ken 2 (Culex quinquefasciatus (Southern house mosquito)).